Consider the following 91-residue polypeptide: Elongation factor 1-beta (91 aa).

It belongs to the EF-1-beta/EF-1-delta family.

Functionally, promotes the exchange of GDP for GTP in EF-1-alpha/GDP, thus allowing the regeneration of EF-1-alpha/GTP that could then be used to form the ternary complex EF-1-alpha/GTP/AAtRNA. This chain is Elongation factor 1-beta, found in Caldivirga maquilingensis (strain ATCC 700844 / DSM 13496 / JCM 10307 / IC-167).